The chain runs to 253 residues: Major prion protein (253 aa).

Positions Met1–Cys22 are cleaved as a signal peptide. The interaction with GRB2, ERI3 and SYN1 stretch occupies residues Lys23–Ser230. A disordered region spans residues Pro26–Ser108. 5 consecutive repeat copies span residues Pro51–Gln59, Pro60–Gln67, Pro68–Gln75, Pro76–Gln83, and Pro84–Gln91. Positions Pro51 to Gln91 are 5 X 8 AA tandem repeats of P-H-G-G-G-W-G-Q. Residues Gln52–Thr95 show a composition bias toward gly residues. Cu(2+) contacts are provided by His61, Gly62, Gly63, His69, Gly70, Gly71, His77, Gly78, Gly79, His85, Gly86, and Gly87. A disulfide bond links Cys179 and Cys214. N-linked (GlcNAc...) asparagine glycosylation is found at Asn181 and Asn197. The GPI-anchor amidated serine moiety is linked to residue Ser230. Residues Ser231 to Gly253 constitute a propeptide, removed in mature form.

Belongs to the prion family. In terms of assembly, monomer and homodimer. Has a tendency to aggregate into amyloid fibrils containing a cross-beta spine, formed by a steric zipper of superposed beta-strands. Soluble oligomers may represent an intermediate stage on the path to fibril formation. Copper binding may promote oligomerization. Interacts with GRB2, APP, ERI3/PRNPIP and SYN1. Mislocalized cytosolically exposed PrP interacts with MGRN1; this interaction alters MGRN1 subcellular location and causes lysosomal enlargement. Interacts with KIAA1191.

It localises to the cell membrane. The protein localises to the golgi apparatus. Its function is as follows. Its primary physiological function is unclear. Has cytoprotective activity against internal or environmental stresses. May play a role in neuronal development and synaptic plasticity. May be required for neuronal myelin sheath maintenance. May play a role in iron uptake and iron homeostasis. Soluble oligomers are toxic to cultured neuroblastoma cells and induce apoptosis (in vitro). Association with GPC1 (via its heparan sulfate chains) targets PRNP to lipid rafts. Also provides Cu(2+) or Zn(2+) for the ascorbate-mediated GPC1 deaminase degradation of its heparan sulfate side chains. This chain is Major prion protein (PRNP), found in Trachypithecus francoisi (Francois' leaf monkey).